The primary structure comprises 62 residues: Large ribosomal subunit protein bL28 (62 aa).

The protein belongs to the bacterial ribosomal protein bL28 family.

The polypeptide is Large ribosomal subunit protein bL28 (Streptococcus agalactiae serotype Ia (strain ATCC 27591 / A909 / CDC SS700)).